Here is a 122-residue protein sequence, read N- to C-terminus: Holo-[acyl-carrier-protein] synthase (122 aa).

2 residues coordinate Mg(2+): Asp9 and Glu58.

It belongs to the P-Pant transferase superfamily. AcpS family. Mg(2+) is required as a cofactor.

It localises to the cytoplasm. It catalyses the reaction apo-[ACP] + CoA = holo-[ACP] + adenosine 3',5'-bisphosphate + H(+). Functionally, transfers the 4'-phosphopantetheine moiety from coenzyme A to a Ser of acyl-carrier-protein. This Chlamydia pneumoniae (Chlamydophila pneumoniae) protein is Holo-[acyl-carrier-protein] synthase.